The primary structure comprises 478 residues: tRNA modification GTPase MnmE (478 aa).

Residues R36, E94, and K133 each contribute to the (6S)-5-formyl-5,6,7,8-tetrahydrofolate site. Positions 230 to 402 (GIHVVLAGRP…LVETLCAKVG (173 aa)) constitute a TrmE-type G domain. Residue N240 participates in K(+) binding. GTP contacts are provided by residues 240-245 (NAGKSS), 259-265 (TDVAGTT), and 284-287 (DTAG). A Mg(2+)-binding site is contributed by S244. Residues T259, V261, and T264 each coordinate K(+). A Mg(2+)-binding site is contributed by T265. Residue K478 participates in (6S)-5-formyl-5,6,7,8-tetrahydrofolate binding.

This sequence belongs to the TRAFAC class TrmE-Era-EngA-EngB-Septin-like GTPase superfamily. TrmE GTPase family. As to quaternary structure, homodimer. Heterotetramer of two MnmE and two MnmG subunits. Requires K(+) as cofactor.

Its subcellular location is the cytoplasm. Its function is as follows. Exhibits a very high intrinsic GTPase hydrolysis rate. Involved in the addition of a carboxymethylaminomethyl (cmnm) group at the wobble position (U34) of certain tRNAs, forming tRNA-cmnm(5)s(2)U34. This Psychrobacter cryohalolentis (strain ATCC BAA-1226 / DSM 17306 / VKM B-2378 / K5) protein is tRNA modification GTPase MnmE.